Consider the following 923-residue polypeptide: Progesterone receptor (923 aa).

A compositionally biased stretch (basic and acidic residues) spans 1–11 (MTELQAKDPRT). Positions 1 to 49 (MTELQAKDPRTLHTSGAAPSPTHVGSPLLARLDPDPFQGSQHSDASSVV) are disordered. The AF3; mediates transcriptional activation (in isoform B) stretch occupies residues 1-164 (MTELQAKDPR…PATKGLLSPL (164 aa)). Positions 1-556 (MTELQAKDPR…YGFDSLPQKI (556 aa)) are modulating, Pro-Rich. A Glycyl lysine isopeptide (Lys-Gly) (interchain with G-Cter in SUMO) cross-link involves residue lysine 7. A Phosphoserine modification is found at serine 20. The span at 38–49 (QGSQHSDASSVV) shows a compositional bias: polar residues. Positions 56–60 (LDRLL) match the LXXL motif 1 motif. The tract at residues 67–111 (AQELPDEKTQNQQSLSDVEGAFSGVEASRRRSRNPRAPEKDSRLL) is disordered. Serine 82 carries the phosphoserine modification. The short motif at 115–119 (LDTLL) is the LXXL motif 2 element. 2 positions are modified to phosphoserine: serine 130 and serine 162. Residues 152 to 239 (RSVPATKGLL…EGSAGPLLKS (88 aa)) are disordered. Residues 165–304 (MSRPESKAGD…LATTVVDFIH (140 aa)) form a mediates transcriptional transrepression (in isoform A) region. The Nuclear localization signal signature appears at 184-188 (VLPKA). 2 positions are modified to phosphoserine: serine 190 and serine 213. Serine 293 bears the Phosphoserine; by MAPK1 mark. Positions 333–371 (AAQVPFAPPRGSPSAPSPPVPCGDFPDCTYPPEGDPKED) are disordered. Over residues 338–353 (FAPPRGSPSAPSPPVP) the composition is skewed to pro residues. The residue at position 344 (serine 344) is a Phosphoserine; by MAPK. Lysine 387 is covalently cross-linked (Glycyl lysine isopeptide (Lys-Gly) (interchain with G-Cter in SUMO); alternate). Lysine 387 is covalently cross-linked (Glycyl lysine isopeptide (Lys-Gly) (interchain with G-Cter in ubiquitin); alternate). Serine 399 is modified (phosphoserine; by CDK2). The tract at residues 412–435 (TFPDFPLPPRPPRAPPSRPGEAAV) is disordered. Residues 416-429 (FPLPPRPPRAPPSR) show a composition bias toward pro residues. The interval 450–536 (SALECILYKA…VYPPYLNYLR (87 aa)) is AF1; mediates transcriptional activation. Lysine 521 participates in a covalent cross-link: Glycyl lysine isopeptide (Lys-Gly) (interchain with G-Cter in SUMO). NR C4-type zinc fingers lie at residues 557 to 577 (CLIC…CGSC) and 593 to 617 (CAGR…LRKC). A DNA-binding region (nuclear receptor) is located at residues 557-629 (CLICGDEASG…AGMVLGGRKF (73 aa)). Position 666 is a phosphoserine (serine 666). The region spanning 669 to 903 (QEIQLVPPLI…EFPEMMSEVI (235 aa)) is the NR LBD domain. Positions 677–923 (LINLLMSIEP…MVKPLLFHKK (247 aa)) are AF2; mediates transcriptional activation. Residue arginine 756 coordinates progesterone.

This sequence belongs to the nuclear hormone receptor family. NR3 subfamily. In terms of assembly, interacts with SMARD1 and UNC45A. Interacts with CUEDC2; the interaction promotes ubiquitination, decreases sumoylation, and represses transcriptional activity. Interacts with PIAS3; the interaction promotes sumoylation of PR in a hormone-dependent manner, inhibits DNA-binding, and alters nuclear export. Interacts with SP1; the interaction requires ligand-induced phosphorylation on Ser-344. Interacts with PRMT2. Isoform A interacts with NCOR2. Isoform B (but not isoform A) interacts with NCOA2 and NCOA1. Isoform B (but not isoform A) interacts with KLF9. Interacts with GTF2B. In terms of processing, phosphorylated on multiple serine sites. Several of these sites are hormone-dependent. Phosphorylation on Ser-293 is highly hormone-dependent and modulates ubiquitination and sumoylation on Lys-387. Phosphorylation on Ser-344 also requires induction by hormone. Basal phosphorylation on Ser-82, Ser-190 and Ser-399 is increased in response to progesterone and can be phosphorylated in vitro by the CDK2-A1 complex. Increased levels of phosphorylation on Ser-399 also in the presence of EGF, heregulin, IGF, PMA and FBS. Phosphorylation at this site by CDK2 is ligand-independent, and increases nuclear translocation and transcriptional activity. Phosphorylation at Ser-293, but not at Ser-190, is impaired during the G(2)/M phase of the cell cycle. Phosphorylation on Ser-344 by ERK1/2 MAPK is required for interaction with SP1. Post-translationally, sumoylation is hormone-dependent and represses transcriptional activity. Sumoylation on all three sites is enhanced by PIAS3. Desumoylated by SENP1. Sumoylation on Lys-387, the main site of sumoylation, is repressed by ubiquitination on the same site, and modulated by phosphorylation at Ser-293. Ubiquitination is hormone-dependent and represses sumoylation on the same site. Promoted by MAPK-mediated phosphorylation on Ser-293. Ubiquitinated by UBR5, leading to its degradation: UBR5 specifically recognizes and binds ligand-bound PGR when it is not associated with coactivators (NCOAs). In presence of NCOAs, the UBR5-degron is not accessible, preventing its ubiquitination and degradation. In terms of processing, palmitoylated by ZDHHC7 and ZDHHC21. Palmitoylation is required for plasma membrane targeting and for rapid intracellular signaling via ERK and AKT kinases and cAMP generation. As to expression, isoform A and isoform B are expressed in the pituitary.

It is found in the nucleus. The protein localises to the cytoplasm. Functionally, the steroid hormones and their receptors are involved in the regulation of eukaryotic gene expression and affect cellular proliferation and differentiation in target tissues. Depending on the isoform, progesterone receptor functions as a transcriptional activator or repressor. Ligand-dependent transdominant repressor of steroid hormone receptor transcriptional activity including repression of its isoform B, MR and ER. Transrepressional activity may involve recruitment of corepressor NCOR2. Its function is as follows. Transcriptional activator of several progesteron-dependent promoters in a variety of cell types. Involved in activation of SRC-dependent MAPK signaling on hormone stimulation. The polypeptide is Progesterone receptor (Pgr) (Rattus norvegicus (Rat)).